A 374-amino-acid polypeptide reads, in one-letter code: DNA replication and repair protein RecF (374 aa).

An ATP-binding site is contributed by 30 to 37 (GPNAQGKT).

Belongs to the RecF family.

Its subcellular location is the cytoplasm. Functionally, the RecF protein is involved in DNA metabolism; it is required for DNA replication and normal SOS inducibility. RecF binds preferentially to single-stranded, linear DNA. It also seems to bind ATP. In Lactobacillus johnsonii (strain CNCM I-12250 / La1 / NCC 533), this protein is DNA replication and repair protein RecF.